The primary structure comprises 338 residues: Elongation factor Ts, mitochondrial (338 aa).

Residues 1–55 constitute a mitochondrion transit peptide; that stretch reads MSLLRSLRLCLVARTGSCPLSALGPGPLLPSLQAGLPLLQSPQQWHTFHSGSWLS. N6-succinyllysine occurs at positions 89, 146, and 205. Ser-283 carries the phosphoserine modification.

Belongs to the EF-Ts family.

It localises to the mitochondrion. Functionally, associates with the EF-Tu.GDP complex and induces the exchange of GDP to GTP. It remains bound to the aminoacyl-tRNA.EF-Tu.GTP complex up to the GTP hydrolysis stage on the ribosome. This is Elongation factor Ts, mitochondrial from Bos taurus (Bovine).